Consider the following 116-residue polypeptide: MSLQEKFDAAVEIIQKLPKTGPVATSNDQKLTFYSLFKQASIGDVNTDRPGIFSIIERKKWDSWKELEGVSQDEAKERYIKALNDMFDKIAEELDVAAWLEQIDPVIKTNLALIGK.

One can recognise an ACB domain in the interval 3–92; that stretch reads LQEKFDAAVE…LNDMFDKIAE (90 aa). Residues 34–38, K60, and Y79 each bind an acyl-CoA; that span reads YSLFK.

It belongs to the ACBP family.

Binds medium- and long-chain acyl-CoA esters with very high affinity and may function as an intracellular carrier of acyl-CoA esters. The sequence is that of Acyl-CoA-binding protein homolog 3 (acbp-3) from Caenorhabditis elegans.